The chain runs to 567 residues: Unguisins hydrolase ungD (567 aa).

The protein belongs to the peptidase S12 family.

The protein operates within secondary metabolite biosynthesis. In terms of biological role, hydrolase; part of the gene cluster that mediates the biosynthesis of the unguisins, gamma-aminobutyric acid (GABA)-containing fungal cyclic heptapeptides with the amino acid sequence cyclo-(D-Ala1-D-Val2-L-Phe3-D-Val4-D-Ala5-D-Trp6-GABA7) for unguisin A and cyclo-(D-Ala1-D-Val2-L-Leu3-D-Val4-D-Ala5-D-Trp6-GABA7) for unguisin B. Within the pathway, the hydrolase ungD catalyzes the hydrolysis between the D-tryptophan and GABA residues of unguisins A and B to produce the corresponding linear peptides. The alanine racemase ungC catalyzes the interconversion of L-alanine and D-alanine, providing the D-alanine which is accepted by the first adenylation domain of the nonribosomal peptide synthetase (NRPS) ungA. UngA is the main enzyme within the cluster which condenses the 7 residues using its respective 7 modules. The terminal condensation domain (Ct) is involved in cyclization with D-alanine and thereby releasing of unguisins A and B. The sequence is that of Unguisins hydrolase ungD from Aspergillus violaceofuscus (strain CBS 115571).